Here is a 260-residue protein sequence, read N- to C-terminus: Ribonuclease PH (260 aa).

Phosphate is bound by residues Arg-88 and 126–128; that span reads GTR.

The protein belongs to the RNase PH family. As to quaternary structure, homohexameric ring arranged as a trimer of dimers.

It carries out the reaction tRNA(n+1) + phosphate = tRNA(n) + a ribonucleoside 5'-diphosphate. Functionally, phosphorolytic 3'-5' exoribonuclease that plays an important role in tRNA 3'-end maturation. Removes nucleotide residues following the 3'-CCA terminus of tRNAs; can also add nucleotides to the ends of RNA molecules by using nucleoside diphosphates as substrates, but this may not be physiologically important. Probably plays a role in initiation of 16S rRNA degradation (leading to ribosome degradation) during starvation. This is Ribonuclease PH from Mycolicibacterium gilvum (strain PYR-GCK) (Mycobacterium gilvum (strain PYR-GCK)).